Here is a 554-residue protein sequence, read N- to C-terminus: Beta-eudesmol synthase (554 aa).

Residues aspartate 305, aspartate 309, and glutamate 456 each contribute to the Mg(2+) site. The DDXXD motif signature appears at 305 to 309; it reads DDIYD.

This sequence belongs to the terpene synthase family. Mg(2+) serves as cofactor. The cofactor is Mn(2+). Expressed in rhizomes. Detected in stems, but not in leaves.

The protein resides in the cytoplasm. The catalysed reaction is (2E,6E)-farnesyl diphosphate + H2O = beta-eudesmol + diphosphate. The enzyme catalyses (2E,6E)-farnesyl diphosphate + H2O = 10-epi-gamma-eudesmol + diphosphate. It catalyses the reaction (2E,6E)-farnesyl diphosphate + H2O = alpha-eudesmol + diphosphate. It participates in secondary metabolite biosynthesis; terpenoid biosynthesis. Its function is as follows. Involved in the biosynthesis of beta-eudesmol, a sesquiterpene with antifungal activity and responsible for resistance of plants to ant attack. Produces mainly beta-eudesmol, but also smaller amounts of 10-epi-gamma-eudesmol, alpha-eudesmol and aristolene. The sequence is that of Beta-eudesmol synthase (ZSS2) from Zingiber zerumbet (Shampoo ginger).